A 197-amino-acid polypeptide reads, in one-letter code: Probable GTP-binding protein EngB (197 aa).

The EngB-type G domain maps to 22–197; sequence TGVEVAFAGR…FKEKLDTWYQ (176 aa). GTP-binding positions include 30–37, 57–61, 75–78, 142–145, and 177–179; these read GRSNAGKS, GRTQL, DLPG, TKAD, and FSS. Residues Ser37 and Thr59 each contribute to the Mg(2+) site.

It belongs to the TRAFAC class TrmE-Era-EngA-EngB-Septin-like GTPase superfamily. EngB GTPase family. Mg(2+) is required as a cofactor.

Necessary for normal cell division and for the maintenance of normal septation. In Francisella tularensis subsp. tularensis (strain FSC 198), this protein is Probable GTP-binding protein EngB.